We begin with the raw amino-acid sequence, 2037 residues long: Protein SWOLLEN 1 (2037 aa).

Disordered stretches follow at residues 141–179 (VEPG…VKTD), 454–487 (REGG…NDRD), 504–531 (SVGY…TDKS), 567–637 (KTSS…KDAV), 686–705 (SLPI…DNTA), 837–893 (VGSP…SGGK), 1011–1045 (ATPE…PMIP), 1148–1197 (KHVQ…ESGP), 1729–1748 (SGET…KRPR), 1793–1812 (KSTR…TGLQ), and 1841–2037 (EAST…QSKK). The segment covering 147–157 (SHERSLSKEET) has biased composition (basic and acidic residues). A compositionally biased stretch (polar residues) spans 158–176 (VNLQPNPSVDDTPGESSVV). A compositionally biased stretch (basic and acidic residues) spans 454-466 (REGGVSKKSDNEG). Residues 504–514 (SVGYVSGGSTS) show a composition bias toward low complexity. The segment covering 515–526 (ELAESESQSDSI) has biased composition (polar residues). Positions 841-852 (STSSLDKTAAKS) are enriched in low complexity. Residues 853 to 865 (SKAKSERKPRRTS) show a composition bias toward basic residues. 2 stretches are compositionally biased toward polar residues: residues 1025–1041 (ETPS…SGTN) and 1151–1171 (QSGT…TSTV). Residues 1179-1189 (TRVKSRKRKKM) show a composition bias toward basic residues. A compositionally biased stretch (basic and acidic residues) spans 1794-1805 (STREENKPDPLR). Polar residues-rich tracts occupy residues 1874 to 1886 (KTIS…TISR), 1942 to 1964 (EEQT…STNK), and 2013 to 2023 (LQTSMMTSKIP). Positions 2028–2037 (SKSHLSQSKK) are enriched in basic residues.

Interacts with importin alpha IMPA1 and IMPA2, required for nuclear-localized proteins import. Mainly expressed in seedlings, flower buds and stems, and, to a lower extent, in leaves and siliques.

Its subcellular location is the nucleus. Under salt stress, appears to prevent the accumulation of reactive oxygen species (ROS) in roots and required for the maintenance of cell wall integrity (cellulose, pectin and lignin composition) by interacting with importin alpha (e.g. IMPA1 and IMPA2) and binding to the promoter of several ROS- and cell wall-related genes to regulate their expression. Necessary for cells organization in meristems and root elongation zones as well as for root elongation in high salinity, but not upon osmotic stress. This Arabidopsis thaliana (Mouse-ear cress) protein is Protein SWOLLEN 1.